The chain runs to 248 residues: Probable transcriptional regulatory protein Smed_2641 (248 aa).

The protein belongs to the TACO1 family.

It localises to the cytoplasm. The polypeptide is Probable transcriptional regulatory protein Smed_2641 (Sinorhizobium medicae (strain WSM419) (Ensifer medicae)).